Consider the following 240-residue polypeptide: Probable alpha-aspartyl dipeptidase (240 aa).

Active-site charge relay system residues include Ser125, Asp140, and His162.

This sequence belongs to the peptidase S51 family.

The protein localises to the cytoplasm. It catalyses the reaction Dipeptidase E catalyzes the hydrolysis of dipeptides Asp-|-Xaa. It does not act on peptides with N-terminal Glu, Asn or Gln, nor does it cleave isoaspartyl peptides.. Hydrolyzes dipeptides containing N-terminal aspartate residues. This chain is Probable alpha-aspartyl dipeptidase, found in Drosophila melanogaster (Fruit fly).